Here is a 506-residue protein sequence, read N- to C-terminus: UDP-N-acetylmuramoyl-L-alanyl-D-glutamate--2,6-diaminopimelate ligase (506 aa).

Ser42 is a binding site for UDP-N-acetyl-alpha-D-muramoyl-L-alanyl-D-glutamate. Residue Gly125 to Thr131 coordinates ATP. Residues Thr166 to Thr167, Ser193, and Arg201 each bind UDP-N-acetyl-alpha-D-muramoyl-L-alanyl-D-glutamate. Position 233 is an N6-carboxylysine (Lys233). Residues Arg395, Asp419 to Arg422, Gly475, and Glu479 contribute to the meso-2,6-diaminopimelate site. The short motif at Asp419–Arg422 is the Meso-diaminopimelate recognition motif element.

The protein belongs to the MurCDEF family. MurE subfamily. The cofactor is Mg(2+). Carboxylation is probably crucial for Mg(2+) binding and, consequently, for the gamma-phosphate positioning of ATP.

The protein resides in the cytoplasm. It carries out the reaction UDP-N-acetyl-alpha-D-muramoyl-L-alanyl-D-glutamate + meso-2,6-diaminopimelate + ATP = UDP-N-acetyl-alpha-D-muramoyl-L-alanyl-gamma-D-glutamyl-meso-2,6-diaminopimelate + ADP + phosphate + H(+). It functions in the pathway cell wall biogenesis; peptidoglycan biosynthesis. Functionally, catalyzes the addition of meso-diaminopimelic acid to the nucleotide precursor UDP-N-acetylmuramoyl-L-alanyl-D-glutamate (UMAG) in the biosynthesis of bacterial cell-wall peptidoglycan. This Streptomyces coelicolor (strain ATCC BAA-471 / A3(2) / M145) protein is UDP-N-acetylmuramoyl-L-alanyl-D-glutamate--2,6-diaminopimelate ligase.